We begin with the raw amino-acid sequence, 102 residues long: UPF0213 protein Spro_0507 (102 aa).

A GIY-YIG domain is found at 6–81 (PTWHLYMLRM…KQLSKTQKER (76 aa)).

This sequence belongs to the UPF0213 family.

The protein is UPF0213 protein Spro_0507 of Serratia proteamaculans (strain 568).